The sequence spans 252 residues: 5-oxoprolinase subunit A (252 aa).

It belongs to the LamB/PxpA family. Forms a complex composed of PxpA, PxpB and PxpC.

The catalysed reaction is 5-oxo-L-proline + ATP + 2 H2O = L-glutamate + ADP + phosphate + H(+). Its function is as follows. Catalyzes the cleavage of 5-oxoproline to form L-glutamate coupled to the hydrolysis of ATP to ADP and inorganic phosphate. The sequence is that of 5-oxoprolinase subunit A from Bacillus cytotoxicus (strain DSM 22905 / CIP 110041 / 391-98 / NVH 391-98).